A 567-amino-acid polypeptide reads, in one-letter code: Delta(24)-sterol reductase (567 aa).

Residues 1–24 (MSDLEAPLRPKRKKIWVDYFVKFR) lie on the Lumenal side of the membrane. Residues 25–45 (WILVIFVVLPISFTLYFLTYL) form a helical; Signal-anchor membrane-spanning segment. One can recognise an FAD-binding PCMH-type domain in the interval 45–231 (LGDVRSEWKS…VAAEVKLIPI (187 aa)). Residues 46–567 (GDVRSEWKSF…AYPEVDQPPD (522 aa)) lie on the Cytoplasmic side of the membrane. The segment at 520 to 541 (CRRKYGAVGTFMSVYYKCKKGR) is interaction with calmodulin. The tract at residues 548-567 (REAEQAHLDTAYPEVDQPPD) is disordered.

This sequence belongs to the DIMINUTO family. As to expression, highly expressed in the apical region and root tips and lower levels in immature and mature internodes and leaves.

Its subcellular location is the membrane. The catalysed reaction is lathosterol + NADP(+) = 5alpha-cholesta-7,24-dien-3beta-ol + NADPH + H(+). Functionally, plays a critical role in the general process of plant cell elongation. This chain is Delta(24)-sterol reductase (DIM), found in Pisum sativum (Garden pea).